Reading from the N-terminus, the 89-residue chain is Large ribosomal subunit protein eL34 (89 aa).

The interval 1 to 22 (MPAPRYKSGSSKKVYRKAPGNS) is disordered.

This sequence belongs to the eukaryotic ribosomal protein eL34 family.

The protein is Large ribosomal subunit protein eL34 of Methanococcus maripaludis (strain C7 / ATCC BAA-1331).